The sequence spans 71 residues: Small ribosomal subunit protein bS21 (71 aa).

This sequence belongs to the bacterial ribosomal protein bS21 family.

This chain is Small ribosomal subunit protein bS21, found in Hydrogenovibrio crunogenus (strain DSM 25203 / XCL-2) (Thiomicrospira crunogena).